Consider the following 95-residue polypeptide: Small integral membrane protein 18 (95 aa).

The chain crosses the membrane as a helical span at residues 35-55; it reads CFVILLLFIFTVVSLVVLAFL.

It localises to the membrane. In Homo sapiens (Human), this protein is Small integral membrane protein 18 (SMIM18).